The following is a 175-amino-acid chain: Putative metal-dependent hydrolase BPUM_0784 (175 aa).

His65, His157, and His161 together coordinate Zn(2+).

This sequence belongs to the metal hydrolase YfiT family. Homodimer. It depends on Zn(2+) as a cofactor.

It localises to the cytoplasm. Possible metal-dependent hydrolase. This chain is Putative metal-dependent hydrolase BPUM_0784, found in Bacillus pumilus (strain SAFR-032).